We begin with the raw amino-acid sequence, 572 residues long: Proline--tRNA ligase (572 aa).

It belongs to the class-II aminoacyl-tRNA synthetase family. ProS type 1 subfamily. Homodimer.

Its subcellular location is the cytoplasm. The enzyme catalyses tRNA(Pro) + L-proline + ATP = L-prolyl-tRNA(Pro) + AMP + diphosphate. In terms of biological role, catalyzes the attachment of proline to tRNA(Pro) in a two-step reaction: proline is first activated by ATP to form Pro-AMP and then transferred to the acceptor end of tRNA(Pro). As ProRS can inadvertently accommodate and process non-cognate amino acids such as alanine and cysteine, to avoid such errors it has two additional distinct editing activities against alanine. One activity is designated as 'pretransfer' editing and involves the tRNA(Pro)-independent hydrolysis of activated Ala-AMP. The other activity is designated 'posttransfer' editing and involves deacylation of mischarged Ala-tRNA(Pro). The misacylated Cys-tRNA(Pro) is not edited by ProRS. The chain is Proline--tRNA ligase from Leuconostoc mesenteroides subsp. mesenteroides (strain ATCC 8293 / DSM 20343 / BCRC 11652 / CCM 1803 / JCM 6124 / NCDO 523 / NBRC 100496 / NCIMB 8023 / NCTC 12954 / NRRL B-1118 / 37Y).